Consider the following 405-residue polypeptide: POC1 centriolar protein homolog A (405 aa).

WD repeat units follow at residues 17–56 (GHRD…RAYR), 59–98 (GHKD…ESTV), 101–140 (AHTA…FLFS), 143–182 (QHIN…CIHS), 185–224 (EHGG…LLQH), 227–266 (LHSA…LLYT), and 269–308 (GHQG…VDYG). The interval 313–352 (RRPPPLTSSSGTLPKMDLPVPPGRDRSLESVQGEPQESIS) is disordered. Residues 341 to 352 (ESVQGEPQESIS) are compositionally biased toward polar residues. Residues 367–395 (QLDILTQTVSILEQRLTLTEDRLKQCLEN) adopt a coiled-coil conformation.

The protein belongs to the WD repeat POC1 family. In terms of assembly, interacts with POC1B. In terms of tissue distribution, widely expressed in embryonic and adult tissues.

Its subcellular location is the cytoplasm. The protein localises to the cytoskeleton. The protein resides in the microtubule organizing center. It is found in the centrosome. It localises to the centriole. Its subcellular location is the cilium basal body. The protein localises to the spindle pole. Its function is as follows. Plays an important role in centriole assembly and/or stability and ciliogenesis. Involved in early steps of centriole duplication, as well as in the later steps of centriole length control. Acts in concert with POC1B to ensure centriole integrity and proper mitotic spindle formation. This chain is POC1 centriolar protein homolog A (Poc1a), found in Mus musculus (Mouse).